The chain runs to 108 residues: Nucleoid-associated protein ACP_0492 (108 aa).

It belongs to the YbaB/EbfC family. In terms of assembly, homodimer.

It is found in the cytoplasm. The protein resides in the nucleoid. In terms of biological role, binds to DNA and alters its conformation. May be involved in regulation of gene expression, nucleoid organization and DNA protection. The polypeptide is Nucleoid-associated protein ACP_0492 (Acidobacterium capsulatum (strain ATCC 51196 / DSM 11244 / BCRC 80197 / JCM 7670 / NBRC 15755 / NCIMB 13165 / 161)).